Here is a 1230-residue protein sequence, read N- to C-terminus: Cullin-associated NEDD8-dissociated protein 1 (1230 aa).

An N-acetylalanine modification is found at alanine 2. HEAT repeat units follow at residues 2–39 (ASAS…KDSI), 44–81 (DSER…KVKE), 83–119 (QVET…ELPP), 131–165 (CKKI…LSRQ), 171–208 (NFHP…SCGN), 210–247 (VFVG…QAGH), 248–282 (RIGE…FESF), 289–366 (EVYP…TRHE), 370–407 (EFYK…QTRP), 424–467 (PLTM…VLPG), 471–510 (QHIP…NHSP), and 515–552 (PHVQ…VIRP). At lysine 55 the chain carries N6-acetyllysine. Positions 315–343 (DEDEDENAMDADGGDDDDQGSDDEYSDDG) are disordered. Position 335 is a phosphoserine (serine 335). Serine 558 is subject to Phosphoserine. 15 HEAT repeats span residues 563–602 (PYIK…NLGD), 606–643 (SDLP…LKID), 646–683 (PVLG…NYSD), 688–725 (AMID…VYPS), 729–768 (KISG…TGTN), 770–808 (LGYM…ALTR), 809–845 (ACPK…LGEV), 852–889 (SGQL…GNLP), 890–927 (EYLP…GLKP), 928–960 (YVEN…KLTL), 961–998 (IDPE…DHPQ), 1002–1039 (PLLK…NKPS), 1043–1097 (DLLD…DSCL), 1099–1133 (RLDI…LSTL), and 1140–1189 (QRLD…IPEA). Lysine 971 carries the post-translational modification N6-acetyllysine.

Belongs to the CAND family. Interacts with TBP. Part of a complex that contains CUL1 and RBX1. Interacts with unneddylated cullins: interacts with CUL1, CUL2, CUL3, CUL4A, CUL4B and CUL5. Does not bind neddylated CUL1. Interaction with cullins is abolished in presence of COMMD1, which antagonizes with CAND1 for interacting with cullins. Interacts with ERCC6. Interacts with DCUN1D1, DCUN1D2, DCUN1D3, DCUN1D4 and DCUN1D5; these interactions are bridged by cullins and strongly inhibits the neddylation of cullins.

It localises to the cytoplasm. It is found in the nucleus. Its function is as follows. Key assembly factor of SCF (SKP1-CUL1-F-box protein) E3 ubiquitin ligase complexes that promotes the exchange of the substrate-recognition F-box subunit in SCF complexes, thereby playing a key role in the cellular repertoire of SCF complexes. Acts as a F-box protein exchange factor. The exchange activity of CAND1 is coupled with cycles of neddylation conjugation: in the deneddylated state, cullin-binding CAND1 binds CUL1-RBX1, increasing dissociation of the SCF complex and promoting exchange of the F-box protein. Probably plays a similar role in other cullin-RING E3 ubiquitin ligase complexes. This is Cullin-associated NEDD8-dissociated protein 1 (CAND1) from Pongo abelii (Sumatran orangutan).